The following is a 392-amino-acid chain: ATP phosphoribosyltransferase regulatory subunit (392 aa).

This sequence belongs to the class-II aminoacyl-tRNA synthetase family. HisZ subfamily. As to quaternary structure, heteromultimer composed of HisG and HisZ subunits.

It is found in the cytoplasm. It participates in amino-acid biosynthesis; L-histidine biosynthesis; L-histidine from 5-phospho-alpha-D-ribose 1-diphosphate: step 1/9. Functionally, required for the first step of histidine biosynthesis. May allow the feedback regulation of ATP phosphoribosyltransferase activity by histidine. The protein is ATP phosphoribosyltransferase regulatory subunit of Prochlorococcus marinus (strain MIT 9303).